The chain runs to 609 residues: Arginine--tRNA ligase (609 aa).

The 'HIGH' region signature appears at 132–142; that stretch reads ANPTSSLHVGH.

This sequence belongs to the class-I aminoacyl-tRNA synthetase family. Monomer.

It localises to the cytoplasm. It catalyses the reaction tRNA(Arg) + L-arginine + ATP = L-arginyl-tRNA(Arg) + AMP + diphosphate. This is Arginine--tRNA ligase from Psychrobacter cryohalolentis (strain ATCC BAA-1226 / DSM 17306 / VKM B-2378 / K5).